We begin with the raw amino-acid sequence, 511 residues long: Maturase K (511 aa).

The protein belongs to the intron maturase 2 family. MatK subfamily.

The protein localises to the plastid. It localises to the chloroplast. Functionally, usually encoded in the trnK tRNA gene intron. Probably assists in splicing its own and other chloroplast group II introns. In Avena sativa (Oat), this protein is Maturase K.